The sequence spans 557 residues: Membrane protein insertase YidC (557 aa).

The next 5 membrane-spanning stretches (helical) occupy residues 6–26 (TILW…WQVH), 219–239 (IGPF…IYTD), 367–387 (IVGN…LAFF), 437–457 (LGGC…YWVL), and 514–534 (MPIV…LYWV).

The protein belongs to the OXA1/ALB3/YidC family. Type 1 subfamily. As to quaternary structure, interacts with the Sec translocase complex via SecD. Specifically interacts with transmembrane segments of nascent integral membrane proteins during membrane integration.

The protein localises to the cell inner membrane. Functionally, required for the insertion and/or proper folding and/or complex formation of integral membrane proteins into the membrane. Involved in integration of membrane proteins that insert both dependently and independently of the Sec translocase complex, as well as at least some lipoproteins. Aids folding of multispanning membrane proteins. This is Membrane protein insertase YidC from Polynucleobacter asymbioticus (strain DSM 18221 / CIP 109841 / QLW-P1DMWA-1) (Polynucleobacter necessarius subsp. asymbioticus).